Reading from the N-terminus, the 488-residue chain is MTKNNEAGWNLDNSYATLPHSFYTEIPPTPVSSPELVKLNHSLAISLGFNPEELKKETEIAIFAGNALPEGAHPLAQAYAGHQFGHFNMLGDGRALLIGEQITPSGKRFDIQLKGSGPTPYSRRGDGRAALGPMLREYIISEAMYALDIPTTRSLAVVTTGEPTYRETKLPGAILTRVASSHIRVGTFQYAAARGSIEDLQSLADYTIKRHYPEIEDPENRYTALLQEVIKKQASLIAKWQLVGFIHGVMNTDNITISGETIDYGPCAFMDHYDQGTVFSSIDTQGRYAYGNQPYMAAWDLARLAESLIPILHEDEEEALKIAQDEISKFSVQYENLWFLGMKKKLGLFSNEEQDHSLIEQLLKMMEKYKADYTNTFRSLTLNTLENTPLFDSSEFKEWYKLWQSRLERQDESKENAYEMMKNNNPSIIPRNHRVEEALEAAVTNGDYSVMEKLLEALANPYAYATDQEEYCVTPAPTNRPYRTFCGT.

The ATP site is built by glycine 91, glycine 93, arginine 94, lysine 114, aspartate 126, glycine 127, arginine 177, and arginine 184. The active-site Proton acceptor is aspartate 253. Residues asparagine 254 and aspartate 263 each coordinate Mg(2+). Aspartate 263 lines the ATP pocket.

The protein belongs to the SELO family. Mg(2+) is required as a cofactor. Mn(2+) serves as cofactor.

The enzyme catalyses L-seryl-[protein] + ATP = 3-O-(5'-adenylyl)-L-seryl-[protein] + diphosphate. The catalysed reaction is L-threonyl-[protein] + ATP = 3-O-(5'-adenylyl)-L-threonyl-[protein] + diphosphate. It catalyses the reaction L-tyrosyl-[protein] + ATP = O-(5'-adenylyl)-L-tyrosyl-[protein] + diphosphate. It carries out the reaction L-histidyl-[protein] + UTP = N(tele)-(5'-uridylyl)-L-histidyl-[protein] + diphosphate. The enzyme catalyses L-seryl-[protein] + UTP = O-(5'-uridylyl)-L-seryl-[protein] + diphosphate. The catalysed reaction is L-tyrosyl-[protein] + UTP = O-(5'-uridylyl)-L-tyrosyl-[protein] + diphosphate. Nucleotidyltransferase involved in the post-translational modification of proteins. It can catalyze the addition of adenosine monophosphate (AMP) or uridine monophosphate (UMP) to a protein, resulting in modifications known as AMPylation and UMPylation. This Bacillus cereus (strain ATCC 10987 / NRS 248) protein is Protein nucleotidyltransferase YdiU.